A 423-amino-acid chain; its full sequence is Phosphoribosylamine--glycine ligase (423 aa).

An ATP-grasp domain is found at 107–312 (KDLCARYDIP…LLPILYATAT (206 aa)). 133–193 (VRAQGAPIVI…EAFLDGEEAS (61 aa)) provides a ligand contact to ATP. Mg(2+) contacts are provided by Glu282 and Asn284.

The protein belongs to the GARS family. Mg(2+) is required as a cofactor. The cofactor is Mn(2+).

The enzyme catalyses 5-phospho-beta-D-ribosylamine + glycine + ATP = N(1)-(5-phospho-beta-D-ribosyl)glycinamide + ADP + phosphate + H(+). The protein operates within purine metabolism; IMP biosynthesis via de novo pathway; N(1)-(5-phospho-D-ribosyl)glycinamide from 5-phospho-alpha-D-ribose 1-diphosphate: step 2/2. The polypeptide is Phosphoribosylamine--glycine ligase (Agrobacterium fabrum (strain C58 / ATCC 33970) (Agrobacterium tumefaciens (strain C58))).